The chain runs to 589 residues: 2-succinyl-5-enolpyruvyl-6-hydroxy-3-cyclohexene-1-carboxylate synthase (589 aa).

This sequence belongs to the TPP enzyme family. MenD subfamily. In terms of assembly, homodimer. Requires Mg(2+) as cofactor. The cofactor is Mn(2+). Thiamine diphosphate is required as a cofactor.

The catalysed reaction is isochorismate + 2-oxoglutarate + H(+) = 5-enolpyruvoyl-6-hydroxy-2-succinyl-cyclohex-3-ene-1-carboxylate + CO2. It participates in quinol/quinone metabolism; 1,4-dihydroxy-2-naphthoate biosynthesis; 1,4-dihydroxy-2-naphthoate from chorismate: step 2/7. The protein operates within quinol/quinone metabolism; menaquinone biosynthesis. Functionally, catalyzes the thiamine diphosphate-dependent decarboxylation of 2-oxoglutarate and the subsequent addition of the resulting succinic semialdehyde-thiamine pyrophosphate anion to isochorismate to yield 2-succinyl-5-enolpyruvyl-6-hydroxy-3-cyclohexene-1-carboxylate (SEPHCHC). This is 2-succinyl-5-enolpyruvyl-6-hydroxy-3-cyclohexene-1-carboxylate synthase from Myxococcus xanthus (strain DK1622).